Reading from the N-terminus, the 255-residue chain is Myogenic factor 5 (255 aa).

The 52-residue stretch at 83-134 folds into the bHLH domain; the sequence is DRRKAATMRERRRLKKVNQAFETLKRCTTTNPNQRLPKVEILRNAIQYIESL. The segment covering 221–242 has biased composition (low complexity); sequence SLPIPDSITPSPTSSTDSLPRS. Positions 221–246 are disordered; sequence SLPIPDSITPSPTSSTDSLPRSPDAH.

As to quaternary structure, efficient DNA binding requires dimerization with another bHLH protein.

It is found in the nucleus. Functionally, acts as a transcriptional activator that promotes transcription of muscle-specific target genes and plays a role in muscle differentiation. Induces fibroblasts to differentiate into myoblasts. Probable sequence specific DNA-binding protein. The chain is Myogenic factor 5 (myf5) from Xenopus laevis (African clawed frog).